The sequence spans 297 residues: Tyrosine recombinase XerD (297 aa).

Residues 2-86 form the Core-binding (CB) domain; the sequence is KKLDPIIEQF…CLRKFFRFLC (85 aa). In terms of domain architecture, Tyr recombinase spans 107–291; the sequence is QLPKSLSEEQ…AKTRLKSIHK (185 aa). Active-site residues include arginine 147, lysine 171, histidine 243, arginine 246, and histidine 269. The O-(3'-phospho-DNA)-tyrosine intermediate role is filled by tyrosine 278.

This sequence belongs to the 'phage' integrase family. XerD subfamily. Forms a cyclic heterotetrameric complex composed of two molecules of XerC and two molecules of XerD.

The protein resides in the cytoplasm. Its function is as follows. Site-specific tyrosine recombinase, which acts by catalyzing the cutting and rejoining of the recombining DNA molecules. The XerC-XerD complex is essential to convert dimers of the bacterial chromosome into monomers to permit their segregation at cell division. It also contributes to the segregational stability of plasmids. The sequence is that of Tyrosine recombinase XerD from Haemophilus ducreyi (strain 35000HP / ATCC 700724).